The chain runs to 161 residues: Crossover junction endodeoxyribonuclease RuvC (161 aa).

Residues D7, E67, and D140 contribute to the active site. Residues D7, E67, and D140 each contribute to the Mg(2+) site.

This sequence belongs to the RuvC family. As to quaternary structure, homodimer which binds Holliday junction (HJ) DNA. The HJ becomes 2-fold symmetrical on binding to RuvC with unstacked arms; it has a different conformation from HJ DNA in complex with RuvA. In the full resolvosome a probable DNA-RuvA(4)-RuvB(12)-RuvC(2) complex forms which resolves the HJ. Requires Mg(2+) as cofactor.

Its subcellular location is the cytoplasm. The catalysed reaction is Endonucleolytic cleavage at a junction such as a reciprocal single-stranded crossover between two homologous DNA duplexes (Holliday junction).. In terms of biological role, the RuvA-RuvB-RuvC complex processes Holliday junction (HJ) DNA during genetic recombination and DNA repair. Endonuclease that resolves HJ intermediates. Cleaves cruciform DNA by making single-stranded nicks across the HJ at symmetrical positions within the homologous arms, yielding a 5'-phosphate and a 3'-hydroxyl group; requires a central core of homology in the junction. The consensus cleavage sequence is 5'-(A/T)TT(C/G)-3'. Cleavage occurs on the 3'-side of the TT dinucleotide at the point of strand exchange. HJ branch migration catalyzed by RuvA-RuvB allows RuvC to scan DNA until it finds its consensus sequence, where it cleaves and resolves the cruciform DNA. The sequence is that of Crossover junction endodeoxyribonuclease RuvC from Natranaerobius thermophilus (strain ATCC BAA-1301 / DSM 18059 / JW/NM-WN-LF).